The sequence spans 364 residues: GTPase Obg (364 aa).

The 159-residue stretch at 1-159 (MKFVDEAYID…KSLKLELKVL (159 aa)) folds into the Obg domain. The OBG-type G domain occupies 160-334 (ADVGLLGMPN…LVKTIYQHVK (175 aa)). Residues 166-173 (GMPNAGKS), 191-195 (FTTLH), 213-216 (DLPG), 284-287 (NKLD), and 315-317 (SAL) each bind GTP. 2 residues coordinate Mg(2+): Ser-173 and Thr-193. Residues 337–364 (QKSEQPEEEVDPRFIELPPEPAKPASSD) form a disordered region.

This sequence belongs to the TRAFAC class OBG-HflX-like GTPase superfamily. OBG GTPase family. Monomer. Mg(2+) is required as a cofactor.

Its subcellular location is the cytoplasm. Its function is as follows. An essential GTPase which binds GTP, GDP and possibly (p)ppGpp with moderate affinity, with high nucleotide exchange rates and a fairly low GTP hydrolysis rate. Plays a role in control of the cell cycle, stress response, ribosome biogenesis and in those bacteria that undergo differentiation, in morphogenesis control. This is GTPase Obg from Polaromonas naphthalenivorans (strain CJ2).